The sequence spans 246 residues: MSEQANALLLDIGNSFIKSAHVKISERVFEQPLIVTRCNEVSKLREQIKASQRVVAAAVGQGQQVKLLESLCAELHVPLILAKSQAQAFSMRCAYRNFSTLGVDRWLAVIAARRISNTDAYCVIDLGTANTCDVVIGHQHLGGWIAPGFSLMRDSLIKNTELVFANDDFPNDLTLGEQTVDCVNMGCAAAVNGFIYAAEQKMRERKSEYTVIITGGGQELIKKNAPKHYYFHKNLVLLGLLEYLFT.

Residue 11-18 (DIGNSFIK) coordinates ATP. Substrate contacts are provided by residues Y95 and 102 to 105 (GVDR). The Proton acceptor role is filled by D104. D125 provides a ligand contact to K(+). T128 is an ATP binding site. Residue T179 coordinates substrate.

It belongs to the type III pantothenate kinase family. Homodimer. Requires NH4(+) as cofactor. It depends on K(+) as a cofactor.

The protein resides in the cytoplasm. The catalysed reaction is (R)-pantothenate + ATP = (R)-4'-phosphopantothenate + ADP + H(+). It functions in the pathway cofactor biosynthesis; coenzyme A biosynthesis; CoA from (R)-pantothenate: step 1/5. Functionally, catalyzes the phosphorylation of pantothenate (Pan), the first step in CoA biosynthesis. The protein is Type III pantothenate kinase of Pseudoalteromonas atlantica (strain T6c / ATCC BAA-1087).